The following is a 360-amino-acid chain: Plastid lipid-associated protein 3, chloroplastic (360 aa).

Over residues 1-37 (MATLFTVTTTSRPFPANPSKTFSPSISLKPNALSFSL) the composition is skewed to polar residues. The N-terminal 52 residues, 1–52 (MATLFTVTTTSRPFPANPSKTFSPSISLKPNALSFSLTHHRPPRPLRFSKIR), are a transit peptide targeting the chloroplast. Residues 1-130 (MATLFTVTTT…EWEEREADDG (130 aa)) form a disordered region. Positions 38 to 50 (THHRPPRPLRFSK) are enriched in basic residues. Over residues 53 to 68 (SSLPSESDSEPEGGYS) the composition is skewed to low complexity. Acidic residues predominate over residues 117–127 (TNEDEWEEREA).

Belongs to the PAP/fibrillin family. Ubiquitous expression among various organs, but only at a very low level.

The protein localises to the plastid. Its subcellular location is the chloroplast. This is Plastid lipid-associated protein 3, chloroplastic (PAP3) from Brassica campestris (Field mustard).